Reading from the N-terminus, the 404-residue chain is Tripartite motif-containing 13 (404 aa).

The RING-type zinc-finger motif lies at 10–56; the sequence is CPICCCLFEDPRVLPCSHSFCKKCLEGILDGNRSPTWRPPFKCPTCR. The B box-type zinc finger occupies 87–129; sequence PRMSQCRVHSGQPLNIFCATDLKLICGFCATTGDHKGHKFCAL. Zn(2+) contacts are provided by C92, H95, C115, and H121. A helical transmembrane segment spans residues 102–119; that stretch reads IFCATDLKLICGFCATTG. Positions 186–236 form a coiled coil; that stretch reads KLLRTLEHKRSEILSDLETLKLAVMQTFDPEINRLRSALEEQRRALNIAES.

Its subcellular location is the endoplasmic reticulum membrane. It functions in the pathway protein modification; protein ubiquitination. Functionally, E3 ubiquitin ligase involved in the retrotranslocation and turnover of membrane and secretory proteins from the ER through a set of processes named ER-associated degradation (ERAD). This process acts on misfolded proteins as well as in the regulated degradation of correctly folded proteins. The protein is Tripartite motif-containing 13 (trim13) of Danio rerio (Zebrafish).